A 664-amino-acid polypeptide reads, in one-letter code: DNA ligase (664 aa).

NAD(+) contacts are provided by residues aspartate 32–aspartate 36 and serine 80–leucine 81. The active-site N6-AMP-lysine intermediate is lysine 122. NAD(+) contacts are provided by arginine 144, glutamate 178, and lysine 314. Residues cysteine 407, cysteine 410, cysteine 423, and cysteine 429 each contribute to the Zn(2+) site. The BRCT domain maps to isoleucine 587–glycine 664.

This sequence belongs to the NAD-dependent DNA ligase family. LigA subfamily. Mg(2+) is required as a cofactor. The cofactor is Mn(2+).

The catalysed reaction is NAD(+) + (deoxyribonucleotide)n-3'-hydroxyl + 5'-phospho-(deoxyribonucleotide)m = (deoxyribonucleotide)n+m + AMP + beta-nicotinamide D-nucleotide.. Its function is as follows. DNA ligase that catalyzes the formation of phosphodiester linkages between 5'-phosphoryl and 3'-hydroxyl groups in double-stranded DNA using NAD as a coenzyme and as the energy source for the reaction. It is essential for DNA replication and repair of damaged DNA. The protein is DNA ligase of Clostridium novyi (strain NT).